The primary structure comprises 142 residues: Transcriptional regulator MraZ (142 aa).

SpoVT-AbrB domains are found at residues 5-51 (ASSL…PRPE) and 77-120 (AMDV…DKAS).

The protein belongs to the MraZ family. As to quaternary structure, forms oligomers.

The protein localises to the cytoplasm. It is found in the nucleoid. This Verminephrobacter eiseniae (strain EF01-2) protein is Transcriptional regulator MraZ.